Consider the following 85-residue polypeptide: uncharacterized protein (85 aa).

2 consecutive transmembrane segments (helical) span residues 12-34 and 49-71; these read ICLSVVTFSTSYSLDAGVVVLAF and IPEFLWVTWQSFIKVLSLLNGFV.

It localises to the cell membrane. This is an uncharacterized protein from Archaeoglobus fulgidus (strain ATCC 49558 / DSM 4304 / JCM 9628 / NBRC 100126 / VC-16).